Consider the following 186-residue polypeptide: uncharacterized protein (186 aa).

The N-terminal stretch at 1-18 is a signal peptide; that stretch reads MNKFLFAAALIVSGLLVG. Cys-19 carries N-palmitoyl cysteine lipidation. Cys-19 carries S-diacylglycerol cysteine lipidation.

Its subcellular location is the cell membrane. This is an uncharacterized protein from Escherichia coli (strain K12).